A 404-amino-acid chain; its full sequence is Cysteine desulfurase IscS (404 aa).

Residues 75 to 76 (AT), Asn-155, Gln-183, and 203 to 205 (SAH) each bind pyridoxal 5'-phosphate. Residue Lys-206 is modified to N6-(pyridoxal phosphate)lysine. Thr-243 lines the pyridoxal 5'-phosphate pocket. The active-site Cysteine persulfide intermediate is the Cys-328. Position 328 (Cys-328) interacts with [2Fe-2S] cluster.

Belongs to the class-V pyridoxal-phosphate-dependent aminotransferase family. NifS/IscS subfamily. As to quaternary structure, homodimer. Forms a heterotetramer with IscU, interacts with other sulfur acceptors. It depends on pyridoxal 5'-phosphate as a cofactor.

It localises to the cytoplasm. The catalysed reaction is (sulfur carrier)-H + L-cysteine = (sulfur carrier)-SH + L-alanine. It participates in cofactor biosynthesis; iron-sulfur cluster biosynthesis. Master enzyme that delivers sulfur to a number of partners involved in Fe-S cluster assembly, tRNA modification or cofactor biosynthesis. Catalyzes the removal of elemental sulfur atoms from cysteine to produce alanine. Functions as a sulfur delivery protein for Fe-S cluster synthesis onto IscU, an Fe-S scaffold assembly protein, as well as other S acceptor proteins. This is Cysteine desulfurase IscS from Pseudomonas fluorescens (strain SBW25).